Reading from the N-terminus, the 331-residue chain is 6-phosphogluconolactonase (331 aa).

This sequence belongs to the cycloisomerase 2 family.

The catalysed reaction is 6-phospho-D-glucono-1,5-lactone + H2O = 6-phospho-D-gluconate + H(+). The protein operates within carbohydrate degradation; pentose phosphate pathway; D-ribulose 5-phosphate from D-glucose 6-phosphate (oxidative stage): step 2/3. In terms of biological role, catalyzes the hydrolysis of 6-phosphogluconolactone to 6-phosphogluconate. The chain is 6-phosphogluconolactonase from Salmonella gallinarum (strain 287/91 / NCTC 13346).